Reading from the N-terminus, the 428-residue chain is 3-phosphoshikimate 1-carboxyvinyltransferase (428 aa).

The 3-phosphoshikimate site is built by Lys-20, Ser-21, and Arg-25. Lys-20 lines the phosphoenolpyruvate pocket. Positions 93 and 122 each coordinate phosphoenolpyruvate. Residues Ser-167, Gln-169, Asp-317, and Lys-344 each contribute to the 3-phosphoshikimate site. Phosphoenolpyruvate is bound at residue Gln-169. Asp-317 serves as the catalytic Proton acceptor. Residues Arg-348 and Arg-390 each contribute to the phosphoenolpyruvate site.

Belongs to the EPSP synthase family. In terms of assembly, monomer.

The protein resides in the cytoplasm. The enzyme catalyses 3-phosphoshikimate + phosphoenolpyruvate = 5-O-(1-carboxyvinyl)-3-phosphoshikimate + phosphate. The protein operates within metabolic intermediate biosynthesis; chorismate biosynthesis; chorismate from D-erythrose 4-phosphate and phosphoenolpyruvate: step 6/7. Catalyzes the transfer of the enolpyruvyl moiety of phosphoenolpyruvate (PEP) to the 5-hydroxyl of shikimate-3-phosphate (S3P) to produce enolpyruvyl shikimate-3-phosphate and inorganic phosphate. This chain is 3-phosphoshikimate 1-carboxyvinyltransferase, found in Leptospira biflexa serovar Patoc (strain Patoc 1 / ATCC 23582 / Paris).